The following is a 1378-amino-acid chain: DNA-directed RNA polymerase subunit beta (1378 aa).

It belongs to the RNA polymerase beta chain family. In terms of assembly, the RNAP catalytic core consists of 2 alpha, 1 beta, 1 beta' and 1 omega subunit. When a sigma factor is associated with the core the holoenzyme is formed, which can initiate transcription.

It catalyses the reaction RNA(n) + a ribonucleoside 5'-triphosphate = RNA(n+1) + diphosphate. Functionally, DNA-dependent RNA polymerase catalyzes the transcription of DNA into RNA using the four ribonucleoside triphosphates as substrates. This Agrobacterium fabrum (strain C58 / ATCC 33970) (Agrobacterium tumefaciens (strain C58)) protein is DNA-directed RNA polymerase subunit beta.